Consider the following 251-residue polypeptide: Imidazole glycerol phosphate synthase subunit HisF (251 aa).

Residues Asp-11 and Asp-130 contribute to the active site.

It belongs to the HisA/HisF family. As to quaternary structure, heterodimer of HisH and HisF.

The protein resides in the cytoplasm. It catalyses the reaction 5-[(5-phospho-1-deoxy-D-ribulos-1-ylimino)methylamino]-1-(5-phospho-beta-D-ribosyl)imidazole-4-carboxamide + L-glutamine = D-erythro-1-(imidazol-4-yl)glycerol 3-phosphate + 5-amino-1-(5-phospho-beta-D-ribosyl)imidazole-4-carboxamide + L-glutamate + H(+). It participates in amino-acid biosynthesis; L-histidine biosynthesis; L-histidine from 5-phospho-alpha-D-ribose 1-diphosphate: step 5/9. Functionally, IGPS catalyzes the conversion of PRFAR and glutamine to IGP, AICAR and glutamate. The HisF subunit catalyzes the cyclization activity that produces IGP and AICAR from PRFAR using the ammonia provided by the HisH subunit. The chain is Imidazole glycerol phosphate synthase subunit HisF from Pelagibacter ubique (strain HTCC1062).